A 181-amino-acid chain; its full sequence is UPF0301 protein MXAN_2022 (181 aa).

Belongs to the UPF0301 (AlgH) family.

This is UPF0301 protein MXAN_2022 from Myxococcus xanthus (strain DK1622).